The following is a 466-amino-acid chain: MEKKPFTPREIVEKLDQYIIGQLDAKKAVAVALRNRYRRSLLHDKLKDEVVPKNILMIGPTGVGKTEIARRIAKISGAPFIKVEATKFTEVGYVGRDVESMVRDLVETAIRIVKEDKMKDVQEEAEKQANKRLVHLLVPGKKKSQSVKNPFEMLFGGSDEDDRDRDQSSEEVELESTRKRIAHQLAMGELEDHYVTIEVEEQQPSMFDMLQGSGMEQMGMNMQDALGNLMPKKKKRRKLTVREARKALTAEEASKLIDMDEVSQEAVYKAEQQGIIFIDEIDKIAKSGGASSADVSREGVQRDILPIVEGSTVMTKYGAVKTDHVLFVAAGAFHMAKPSDLIPELQGRFPIRVELDKLSIEDFVKILTEPDNALLKQYKALLETEGISLEFSDDAIHKIAEVAYHVNQETDNIGARRLHTILEKLLEELSFEAPDITLGTVTITPQYVEEKLGKIANNKDLSQFIL.

ATP contacts are provided by residues Ile-20 and 62–67; that span reads GVGKTE. The interval 153 to 177 is disordered; sequence MLFGGSDEDDRDRDQSSEEVELEST. Positions 158-174 are enriched in acidic residues; sequence SDEDDRDRDQSSEEVEL. ATP contacts are provided by Asp-279, Glu-344, and Arg-416.

The protein belongs to the ClpX chaperone family. HslU subfamily. A double ring-shaped homohexamer of ClpQ is capped on each side by a ring-shaped ClpY homohexamer. The assembly of the ClpQ/ClpY complex is dependent on binding of ATP.

It is found in the cytoplasm. Its function is as follows. ATPase subunit of a proteasome-like degradation complex; this subunit has chaperone activity. The protein is ATP-dependent protease ATPase subunit ClpY (clpY) of Bacillus pumilus (strain SAFR-032).